The sequence spans 507 residues: ATP synthase subunit alpha, chloroplastic (507 aa).

170–177 serves as a coordination point for ATP; it reads GDRQTGKT.

It belongs to the ATPase alpha/beta chains family. F-type ATPases have 2 components, CF(1) - the catalytic core - and CF(0) - the membrane proton channel. CF(1) has five subunits: alpha(3), beta(3), gamma(1), delta(1), epsilon(1). CF(0) has four main subunits: a, b, b' and c.

The protein resides in the plastid. It localises to the chloroplast thylakoid membrane. It catalyses the reaction ATP + H2O + 4 H(+)(in) = ADP + phosphate + 5 H(+)(out). Produces ATP from ADP in the presence of a proton gradient across the membrane. The alpha chain is a regulatory subunit. This chain is ATP synthase subunit alpha, chloroplastic, found in Cucumis sativus (Cucumber).